The chain runs to 744 residues: Serine/threonine-protein kinase GM11705 (744 aa).

Over residues Val17 to Ser35 the composition is skewed to polar residues. 2 disordered regions span residues Val17–Asn38 and Asn54–Glu78. Doublecortin domains lie at Leu154–Asn240 and Arg309–Phe392. Positions Tyr473–Thr731 constitute a Protein kinase domain. Residues Ile479–Val487 and Lys502 each bind ATP. Catalysis depends on Asp594, which acts as the Proton acceptor.

Belongs to the protein kinase superfamily. CAMK Ser/Thr protein kinase family. CaMK subfamily.

It catalyses the reaction L-seryl-[protein] + ATP = O-phospho-L-seryl-[protein] + ADP + H(+). It carries out the reaction L-threonyl-[protein] + ATP = O-phospho-L-threonyl-[protein] + ADP + H(+). The protein is Serine/threonine-protein kinase GM11705 of Drosophila sechellia (Fruit fly).